The sequence spans 314 residues: Putative S-adenosyl-L-methionine-dependent methyltransferase MAV_4441 (314 aa).

S-adenosyl-L-methionine is bound by residues Asp-138 and 167–168 (DL).

The protein belongs to the UPF0677 family.

Its function is as follows. Exhibits S-adenosyl-L-methionine-dependent methyltransferase activity. The chain is Putative S-adenosyl-L-methionine-dependent methyltransferase MAV_4441 from Mycobacterium avium (strain 104).